The chain runs to 601 residues: FAD-binding monooxygenase stcW (601 aa).

Residues 42 to 43 (FS), glutamate 64, tryptophan 73, aspartate 84, tyrosine 90, and valine 133 contribute to the FAD site.

This sequence belongs to the FAD-binding monooxygenase family. The cofactor is FAD.

It participates in mycotoxin biosynthesis; sterigmatocystin biosynthesis. FAD-binding monooxygenase; part of the gene cluster that mediates the biosynthesis of sterigmatocystin (ST), a polyketide-derived furanocoumarin which is part of the most toxic and carcinogenic compounds among the known mycotoxins. The first step in the biosynthesis of sterigmatocystin is the production of hexanoate by the fatty acid synthase (FAS) units stcJ and stcK. The polyketide backbone is assembled by the non-reducing polyketide synthase stcA by condensation of the starter hexanoyl-CoA and 7 malonyl-CoA extender units followed by cyclization and release of norsolorinic acid. Norsolorinic acid is the first stable intermediate in the biosynthesis of sterigmatocystin and is converted into averantin (AVN) by the ketoreductase stcE which reduces the hexanoate ketone to an alcohol. Averantin is then oxidized into 5'-hydroxyaverantin (HAVN) by the cytochrome P450 monooxygenase stcF. 5'-hydroxyaverantin is further converted to 5'-oxyaverantin (OAVN) by the 5'-hydroxyaverantin dehydrogenase stcG. The next step is the conversion of OAVN into averufin (AVF) which is catalyzed by a yet to be identified enzyme. The cytochrome P450 monooxygenase stcB and the flavin-binding monooxygenase stcW are both required for the conversion of averufin to 1-hydroxyversicolorone. The esterase stcI probably catalyzes the formation of versiconal hemiacetal acetate from 1-hydroxyversicolorone. The oxydoreductase stcN then probably catalyzes the biosynthetic step from versiconal to versicolorin B (VERB). The next step is performed by the versicolorin B desaturase stcL to produce versicolorin A (VERA). The ketoreductase stcU and the cytochrome P450 monooxygenase stcS are involved in the conversion of versicolorin A to demethylsterigmatocystin. The Baeyer-Villiger oxidas stcQ and the reductase stcR might be involved in the biosynthetic step from versicolorin A to demethylsterigmatocystin. The final step in the biosynthesis of sterigmatocystin is the methylation of demethylsterigmatocystin catalyzed by the methyltransferase stcP. In Emericella nidulans (strain FGSC A4 / ATCC 38163 / CBS 112.46 / NRRL 194 / M139) (Aspergillus nidulans), this protein is FAD-binding monooxygenase stcW.